We begin with the raw amino-acid sequence, 513 residues long: Histidine ammonia-lyase (513 aa).

Positions 144 to 146 (ASG) form a cross-link, 5-imidazolinone (Ala-Gly). S145 carries the 2,3-didehydroalanine (Ser) modification.

Belongs to the PAL/histidase family. Post-translationally, contains an active site 4-methylidene-imidazol-5-one (MIO), which is formed autocatalytically by cyclization and dehydration of residues Ala-Ser-Gly.

Its subcellular location is the cytoplasm. The enzyme catalyses L-histidine = trans-urocanate + NH4(+). Its pathway is amino-acid degradation; L-histidine degradation into L-glutamate; N-formimidoyl-L-glutamate from L-histidine: step 1/3. In Streptococcus pyogenes serotype M49 (strain NZ131), this protein is Histidine ammonia-lyase.